A 193-amino-acid chain; its full sequence is Frataxin, mitochondrial (193 aa).

The transit peptide at 1–72 (MIFNFLNKAS…KQQQQLSKSF (72 aa)) directs the protein to the mitochondrion.

This sequence belongs to the frataxin family. In terms of assembly, monomer. Oligomer.

The protein resides in the mitochondrion. The catalysed reaction is 4 Fe(2+) + O2 + 4 H(+) = 4 Fe(3+) + 2 H2O. Promotes the biosynthesis of heme as well as the assembly and repair of iron-sulfur clusters by delivering Fe(2+) to proteins involved in these pathways. May play a role in the protection against iron-catalyzed oxidative stress through its ability to catalyze the oxidation of Fe(2+) to Fe(3+). May be able to store large amounts of the metal in the form of a ferrihydrite mineral by oligomerization. This is Frataxin, mitochondrial (fxn) from Dictyostelium discoideum (Social amoeba).